A 132-amino-acid chain; its full sequence is Small ribosomal subunit protein uS11 (132 aa).

The interval 113–132 (VTPIPHDGTRAPGGKRGRRV) is disordered.

It belongs to the universal ribosomal protein uS11 family. As to quaternary structure, part of the 30S ribosomal subunit.

Functionally, located on the platform of the 30S subunit. This is Small ribosomal subunit protein uS11 from Methanocella arvoryzae (strain DSM 22066 / NBRC 105507 / MRE50).